Here is a 259-residue protein sequence, read N- to C-terminus: Ribosomal RNA small subunit methyltransferase A (259 aa).

S-adenosyl-L-methionine-binding residues include N15, L17, G41, E62, D86, and N105.

Belongs to the class I-like SAM-binding methyltransferase superfamily. rRNA adenine N(6)-methyltransferase family. RsmA subfamily.

The protein resides in the cytoplasm. The catalysed reaction is adenosine(1518)/adenosine(1519) in 16S rRNA + 4 S-adenosyl-L-methionine = N(6)-dimethyladenosine(1518)/N(6)-dimethyladenosine(1519) in 16S rRNA + 4 S-adenosyl-L-homocysteine + 4 H(+). Its function is as follows. Specifically dimethylates two adjacent adenosines (A1518 and A1519) in the loop of a conserved hairpin near the 3'-end of 16S rRNA in the 30S particle. May play a critical role in biogenesis of 30S subunits. The sequence is that of Ribosomal RNA small subunit methyltransferase A from Mycoplasmopsis synoviae (strain 53) (Mycoplasma synoviae).